Consider the following 161-residue polypeptide: Effector CFEM5 (161 aa).

A signal peptide spans 1–23; it reads MFSLTKSVLFTSIVAIAAQATTA. One can recognise a CFEM domain in the interval 24–126; the sequence is VSSPTQTSLP…KVLDAVVASA (103 aa). 3 disulfide bridges follow: C46-C78, C56-C63, and C65-C100. D60 is a binding site for heme.

It belongs to the RBT5 family. As to quaternary structure, interacts with Z.mays LRR5; the interaction is direct. Interacts with Z.mays WAK17 isoform 2; the interaction is direct.

It localises to the membrane. Its subcellular location is the secreted. Functionally, suppresses host programmed cell death during infection by binding to Z.mays WAK17 isoform 2 and Z.mays LRR5, to prevent activation of Z.mays WAK17 isoform 1 and the downstream hypersensitive response. The polypeptide is Effector CFEM5 (Gibberella zeae (strain ATCC MYA-4620 / CBS 123657 / FGSC 9075 / NRRL 31084 / PH-1) (Wheat head blight fungus)).